A 650-amino-acid chain; its full sequence is Acetyl-coenzyme A synthetase (650 aa).

CoA-binding positions include 191–194 (RGGR), threonine 311, and asparagine 335. Residues 387 to 389 (GEP), 411 to 416 (DTWWQT), aspartate 500, and arginine 515 contribute to the ATP site. Serine 523 contacts CoA. Arginine 526 contributes to the ATP binding site. 3 residues coordinate Mg(2+): valine 537, histidine 539, and valine 542. Arginine 584 contributes to the CoA binding site. Lysine 609 is modified (N6-acetyllysine).

Belongs to the ATP-dependent AMP-binding enzyme family. Mg(2+) serves as cofactor. Acetylated. Deacetylation by the SIR2-homolog deacetylase activates the enzyme.

The enzyme catalyses acetate + ATP + CoA = acetyl-CoA + AMP + diphosphate. Its function is as follows. Catalyzes the conversion of acetate into acetyl-CoA (AcCoA), an essential intermediate at the junction of anabolic and catabolic pathways. AcsA undergoes a two-step reaction. In the first half reaction, AcsA combines acetate with ATP to form acetyl-adenylate (AcAMP) intermediate. In the second half reaction, it can then transfer the acetyl group from AcAMP to the sulfhydryl group of CoA, forming the product AcCoA. This is Acetyl-coenzyme A synthetase from Shewanella oneidensis (strain ATCC 700550 / JCM 31522 / CIP 106686 / LMG 19005 / NCIMB 14063 / MR-1).